The following is a 1064-amino-acid chain: WD repeat-containing protein on Y chromosome (1064 aa).

8 WD repeats span residues 153-197 (EEVT…IRTA), 326-365 (RVPL…EPSA), 369-408 (GHNG…LLQT), 459-498 (THAA…RKII), 511-550 (IIDI…VVRN), 598-638 (FHTD…RRYS), 746-785 (KTGD…EAEK), and 827-866 (AHLK…LGTL). A compositionally biased stretch (basic and acidic residues) spans 914–924 (PAKRAEVKAPE). Disordered stretches follow at residues 914–935 (PAKR…QTDD) and 1023–1064 (GSAL…QQSE). The segment covering 925–935 (DRDEETAQTDD) has biased composition (acidic residues).

In Drosophila pseudoobscura pseudoobscura (Fruit fly), this protein is WD repeat-containing protein on Y chromosome.